Consider the following 618-residue polypeptide: Structural protein ORF618 (618 aa).

A coiled-coil region spans residues 570-598 (ILEAKRQIEDRAKGLSKNLDNTVTEIMNA).

It is found in the virion. This chain is Structural protein ORF618, found in Acidianus two-tailed virus (ATV).